We begin with the raw amino-acid sequence, 400 residues long: Acetate kinase (400 aa).

Mg(2+) is bound at residue Asn10. Lys17 provides a ligand contact to ATP. Arg89 is a substrate binding site. Catalysis depends on Asp148, which acts as the Proton donor/acceptor. Residues 208–212 (HLGNG), 283–285 (DCR), and 331–335 (GIGEN) contribute to the ATP site. Mg(2+) is bound at residue Glu385.

The protein belongs to the acetokinase family. Homodimer. Requires Mg(2+) as cofactor. Mn(2+) is required as a cofactor.

The protein resides in the cytoplasm. The catalysed reaction is acetate + ATP = acetyl phosphate + ADP. It participates in metabolic intermediate biosynthesis; acetyl-CoA biosynthesis; acetyl-CoA from acetate: step 1/2. Catalyzes the formation of acetyl phosphate from acetate and ATP. Can also catalyze the reverse reaction. The protein is Acetate kinase of Haemophilus ducreyi (strain 35000HP / ATCC 700724).